Here is a 385-residue protein sequence, read N- to C-terminus: 8-amino-7-oxononanoate synthase (385 aa).

Arg-23 is a binding site for substrate. A pyridoxal 5'-phosphate-binding site is contributed by 110–111; the sequence is GF. Residue His-135 coordinates substrate. The pyridoxal 5'-phosphate site is built by Ser-180, His-208, and Thr-234. An N6-(pyridoxal phosphate)lysine modification is found at Lys-237. Thr-350 provides a ligand contact to substrate.

The protein belongs to the class-II pyridoxal-phosphate-dependent aminotransferase family. BioF subfamily. Homodimer. Pyridoxal 5'-phosphate serves as cofactor.

The catalysed reaction is 6-carboxyhexanoyl-[ACP] + L-alanine + H(+) = (8S)-8-amino-7-oxononanoate + holo-[ACP] + CO2. Its pathway is cofactor biosynthesis; biotin biosynthesis. Functionally, catalyzes the decarboxylative condensation of pimeloyl-[acyl-carrier protein] and L-alanine to produce 8-amino-7-oxononanoate (AON), [acyl-carrier protein], and carbon dioxide. The polypeptide is 8-amino-7-oxononanoate synthase (Vibrio vulnificus (strain YJ016)).